Reading from the N-terminus, the 300-residue chain is Actin-related protein 2/3 complex subunit 2-A (300 aa).

The protein belongs to the ARPC2 family. Component of the Arp2/3 complex composed of actr2/arp2, actr3/arp3, arpc1 (arpc1a or arpc1b), arpc2, arpc3, arpc4 and arpc5.

Its subcellular location is the cytoplasm. It localises to the cytoskeleton. It is found in the cell projection. The protein resides in the nucleus. In terms of biological role, actin-binding component of the Arp2/3 complex, a multiprotein complex that mediates actin polymerization upon stimulation by nucleation-promoting factor (NPF). The Arp2/3 complex mediates the formation of branched actin networks in the cytoplasm, providing the force for cell motility. In addition to its role in the cytoplasmic cytoskeleton, the Arp2/3 complex also promotes actin polymerization in the nucleus, thereby regulating gene transcription and repair of damaged DNA. The Arp2/3 complex promotes homologous recombination (HR) repair in response to DNA damage by promoting nuclear actin polymerization, leading to drive motility of double-strand breaks (DSBs). This chain is Actin-related protein 2/3 complex subunit 2-A (arpc2-a), found in Xenopus laevis (African clawed frog).